The following is a 398-amino-acid chain: Thyrotropin-releasing hormone receptor (398 aa).

Residues 1 to 28 (MENETGSELNQTQLQPRAVVALEYQVVT) lie on the Extracellular side of the membrane. N-linked (GlcNAc...) asparagine glycosylation is found at Asn3 and Asn10. The helical transmembrane segment at 29–51 (ILLVLIICGLGIVGNIMVVLVVM) threads the bilayer. Over 52-61 (RTKHMRTPTN) the chain is Cytoplasmic. A helical transmembrane segment spans residues 62–83 (CYLVSLAVADLMVLVAAGLPNI). The Extracellular segment spans residues 84–99 (TDSIYGSWVYGYVGCL). Cys98 and Cys179 form a disulfide bridge. A helical membrane pass occupies residues 100–121 (CITYLQYLGINASSCSITAFTI). Residues 122–144 (ERYIAICHPIKAQFLCTFSRAKK) lie on the Cytoplasmic side of the membrane. A helical membrane pass occupies residues 145–168 (IIIFVWAFTSIYCMLWFFLLDLNI). Topologically, residues 169-193 (STYKDAIVVSCGYKISRNYYSPIYL) are extracellular. The helical transmembrane segment at 194–215 (MDFGVFYVVPMILATVLYGFIA) threads the bilayer. Residues 216-266 (RILFLNPIPSDPKENSNMWKNDSTHQNKNLNSKTSNRYFNSTVSSRKQVTK) are Cytoplasmic-facing. Residues 267–288 (MLAVVVILFALLWMPYRTLVVV) form a helical membrane-spanning segment. The Extracellular segment spans residues 289 to 296 (NSFLSSPF). The helical transmembrane segment at 297–319 (QENWFLLFCRICIYLNSAINPVI) threads the bilayer. Topologically, residues 320–398 (YNLMSQKFRA…LASEITFNQS (79 aa)) are cytoplasmic.

This sequence belongs to the G-protein coupled receptor 1 family.

It is found in the cell membrane. In terms of biological role, receptor for thyrotropin-releasing hormone (TRH). Upon ligand binding, this G-protein-coupled receptor triggers activation of the phosphatidylinositol (IP3)-calcium-protein kinase C (PKC) pathway. The protein is Thyrotropin-releasing hormone receptor (TRHR) of Bos taurus (Bovine).